We begin with the raw amino-acid sequence, 155 residues long: MAEAAQQDAQQNFAIQRIFLKDVSFEAPNSPDMFQKEWNPDVKLDLDTQSRELGEGVYEVILRLTVTVKNAEDTAFLCEVQQGGIFSASEMEAGQLAHCLGAFCPNILFPYARETISSLVVKGTFPQLNLAPVNFDALFMNYLQNQAQQAEGEQA.

The protein belongs to the SecB family. In terms of assembly, homotetramer, a dimer of dimers. One homotetramer interacts with 1 SecA dimer.

The protein localises to the cytoplasm. Functionally, one of the proteins required for the normal export of preproteins out of the cell cytoplasm. It is a molecular chaperone that binds to a subset of precursor proteins, maintaining them in a translocation-competent state. It also specifically binds to its receptor SecA. The sequence is that of Protein-export protein SecB from Vibrio atlanticus (strain LGP32) (Vibrio splendidus (strain Mel32)).